A 40-amino-acid chain; its full sequence is Photosystem II reaction center protein J (40 aa).

Residues 8-28 traverse the membrane as a helical segment; it reads IPLWLVATVAGLAAIGVLGIF.

It belongs to the PsbJ family. As to quaternary structure, PSII is composed of 1 copy each of membrane proteins PsbA, PsbB, PsbC, PsbD, PsbE, PsbF, PsbH, PsbI, PsbJ, PsbK, PsbL, PsbM, PsbT, PsbX, PsbY, PsbZ, Psb30/Ycf12, at least 3 peripheral proteins of the oxygen-evolving complex and a large number of cofactors. It forms dimeric complexes.

The protein localises to the plastid. Its subcellular location is the cyanelle thylakoid membrane. Its function is as follows. One of the components of the core complex of photosystem II (PSII). PSII is a light-driven water:plastoquinone oxidoreductase that uses light energy to abstract electrons from H(2)O, generating O(2) and a proton gradient subsequently used for ATP formation. It consists of a core antenna complex that captures photons, and an electron transfer chain that converts photonic excitation into a charge separation. In Cyanophora paradoxa, this protein is Photosystem II reaction center protein J.